A 575-amino-acid chain; its full sequence is Urease subunit alpha (575 aa).

The region spanning Gly-137–Phe-575 is the Urease domain. Ni(2+)-binding residues include His-142, His-144, and Lys-225. An N6-carboxylysine modification is found at Lys-225. His-227 lines the substrate pocket. Ni(2+)-binding residues include His-254 and His-280. Residue His-328 is the Proton donor of the active site. Position 368 (Asp-368) interacts with Ni(2+).

This sequence belongs to the metallo-dependent hydrolases superfamily. Urease alpha subunit family. In terms of assembly, heterotrimer of UreA (gamma), UreB (beta) and UreC (alpha) subunits. Three heterotrimers associate to form the active enzyme. It depends on Ni cation as a cofactor. Post-translationally, carboxylation allows a single lysine to coordinate two nickel ions.

It is found in the cytoplasm. It carries out the reaction urea + 2 H2O + H(+) = hydrogencarbonate + 2 NH4(+). It functions in the pathway nitrogen metabolism; urea degradation; CO(2) and NH(3) from urea (urease route): step 1/1. This Methylibium petroleiphilum (strain ATCC BAA-1232 / LMG 22953 / PM1) protein is Urease subunit alpha.